The chain runs to 109 residues: Putative double-stranded DNA mimic protein YciU (109 aa).

Belongs to the putative dsDNA mimic protein family.

In terms of biological role, may act as a double-stranded DNA (dsDNA) mimic. Probably regulates the activity of a dsDNA-binding protein. The protein is Putative double-stranded DNA mimic protein YciU of Escherichia coli O45:K1 (strain S88 / ExPEC).